The primary structure comprises 514 residues: Na(+)/H(+) antiporter NhaB (514 aa).

Transmembrane regions (helical) follow at residues L23–A43, P63–A83, L97–F117, L120–F140, F144–I164, L202–P222, F238–M258, A303–I323, L357–I377, L391–I411, A447–I467, and V475–F495.

The protein belongs to the NhaB Na(+)/H(+) (TC 2.A.34) antiporter family.

The protein resides in the cell inner membrane. The catalysed reaction is 2 Na(+)(in) + 3 H(+)(out) = 2 Na(+)(out) + 3 H(+)(in). Functionally, na(+)/H(+) antiporter that extrudes sodium in exchange for external protons. The sequence is that of Na(+)/H(+) antiporter NhaB from Salmonella paratyphi B (strain ATCC BAA-1250 / SPB7).